We begin with the raw amino-acid sequence, 406 residues long: Putative sodium-coupled neutral amino acid transporter 11 (406 aa).

Residues 1–7 lie on the Cytoplasmic side of the membrane; it reads MKQAGFP. A helical membrane pass occupies residues 8 to 28; that stretch reads LGILLLFWVSYVTDFSLVLLI. Residue asparagine 44 is glycosylated (N-linked (GlcNAc...) asparagine). Transmembrane regions (helical) follow at residues 48–68, 93–113, 121–141, 156–176, 202–222, and 241–263; these read GFPG…IAMI, VFIG…LPLS, LGKV…IVMA, AWVF…FAFI, MSIV…YLTF, and VTFG…CFVT. A glycan (N-linked (GlcNAc...) asparagine) is linked at asparagine 275. Transmembrane regions (helical) follow at residues 279 to 299, 301 to 321, and 340 to 360; these read VFHI…SLLI, CLGI…IFII, and IMSC…FVMA.

This sequence belongs to the amino acid/polyamine transporter 2 family.

It is found in the membrane. Putative sodium-dependent amino acid/proton antiporter. The sequence is that of Putative sodium-coupled neutral amino acid transporter 11 (SLC38A11) from Homo sapiens (Human).